A 62-amino-acid chain; its full sequence is MRCLQVFIIFLLLIPSPPSVDAQRKTKDDVPLASFHDNAKRTLKRLWNKRSCCPREFLCCLR.

The signal sequence occupies residues M1–A22. A propeptide spanning residues Q23 to N48 is cleaved from the precursor.

It belongs to the conotoxin T superfamily. Post-translationally, contains 2 disulfide bonds that can be either 'C1-C3, C2-C4' or 'C1-C4, C2-C3', since these disulfide connectivities have been observed for conotoxins with cysteine framework V (for examples, see AC P0DQQ7 and AC P81755). Expressed by the venom duct.

The protein resides in the secreted. This Conus litteratus (Lettered cone) protein is Conotoxin Lt5.5.